The primary structure comprises 1421 residues: Cytoadherence-linked asexual protein 3.2 (1421 aa).

The signal sequence occupies residues 1–24; sequence MVSFFKTPIIIFFFLLCLNEKVLC. Intrachain disulfides connect Cys-335–Cys-363, Cys-409–Cys-415, Cys-519–Cys-547, and Cys-523–Cys-544. The helical transmembrane segment at 1203-1223 threads the bilayer; that stretch reads NFFMELANGFMYAFCFFAISQ. A disulfide bond links Cys-1352 and Cys-1355. The tract at residues 1371–1413 is disordered; that stretch reads GDKNTNETTEIKKQTSTYIDTEKMNEADSADSDDEKDFDTPDN. Acidic residues predominate over residues 1398 to 1412; it reads DSADSDDEKDFDTPD.

As to quaternary structure, component of the RhopH complex. RhopH complex is at least composed of CLAG3.1/CLAG3.2, RhopH2 and RhopH3 with a 1:1:1 subunit stoichiometry. CLAG3.1/CLAG3.2 mediates subunit association through independent contacts with RhopH2 and RhopH3, which do not directly interact with one another. Interacts with RhopH2. Interacts with RhopH3.

The protein resides in the host cell membrane. Its subcellular location is the parasitophorous vacuole membrane. The protein localises to the host cytoplasm. It is found in the cytoplasmic vesicle. It localises to the secretory vesicle. The protein resides in the rhoptry. In terms of biological role, participates in the formation of new permeability pathways in Plasmodium-infected erythrocytes enabling the uptake of nutrients from the blood plasma. The sequence is that of Cytoadherence-linked asexual protein 3.2 from Plasmodium falciparum.